Consider the following 90-residue polypeptide: Sec-independent protein translocase protein TatAo (90 aa).

Residues Phe8 to Phe28 form a helical membrane-spanning segment. The segment at Ser39–Arg90 is disordered. Over residues Glu46–Glu63 the composition is skewed to basic and acidic residues. The span at Gly64 to Arg90 shows a compositional bias: acidic residues.

This sequence belongs to the TatA/E family. In terms of assembly, forms a complex with TatC. Cytoplasmic and membrane-bound TatA form high-molecular-weight complexes.

The protein resides in the cell membrane. Its subcellular location is the cytoplasm. In terms of biological role, part of the twin-arginine translocation (Tat) system that transports large folded proteins containing a characteristic twin-arginine motif in their signal peptide across membranes. TatA could form the protein-conducting channel of the Tat system. This chain is Sec-independent protein translocase protein TatAo, found in Haloferax volcanii (strain ATCC 29605 / DSM 3757 / JCM 8879 / NBRC 14742 / NCIMB 2012 / VKM B-1768 / DS2) (Halobacterium volcanii).